The primary structure comprises 421 residues: Gamma-glutamyl phosphate reductase (421 aa).

This sequence belongs to the gamma-glutamyl phosphate reductase family.

The protein localises to the cytoplasm. It catalyses the reaction L-glutamate 5-semialdehyde + phosphate + NADP(+) = L-glutamyl 5-phosphate + NADPH + H(+). It participates in amino-acid biosynthesis; L-proline biosynthesis; L-glutamate 5-semialdehyde from L-glutamate: step 2/2. Its function is as follows. Catalyzes the NADPH-dependent reduction of L-glutamate 5-phosphate into L-glutamate 5-semialdehyde and phosphate. The product spontaneously undergoes cyclization to form 1-pyrroline-5-carboxylate. The protein is Gamma-glutamyl phosphate reductase of Pseudomonas savastanoi pv. phaseolicola (strain 1448A / Race 6) (Pseudomonas syringae pv. phaseolicola (strain 1448A / Race 6)).